The sequence spans 511 residues: MEEFKGYFEKSGSIQQHFLYPLLFQEYIYALAHNHGLNVNGSIFYELPEISGYDKKFSSLLVKRLITRVYQQNYLINSVNHSNPNRFVGHNKNFYSQMISEGFAVIVEIPFSLRLVSSLEEKKEIPKSQNLRSIHSIFPFFEDNFSHLNWISDILIPYPDHLEMLVQILQCWIQDVPSLHLLRIFFHEYHNWGNPITSRKSNYYGLSKENPRLFWSLYNPYVVKCESIFNFLRKQSSYLRSTFYGTILERTHFYGKMKPFGVTCANDFQKTLWLFKDPFMHYVRYQGKSILVSKGTHLLMKKWKSYFVNFWQCHFRFWSQPGRIHISQFSKFSFYFLGYLSSVPINPSAVKSQMLESSFLIDIVTKKFETIVPIIPIIGSLSKAKFCNVSGNPISKPVWADLSDSDIIDRFGRICRNLSHYYSGSSKKKSLYRIKYILRLSCARTLARKHKSTVRAFLQRLGSEFLEEFFTEEEKVLSLILPRISYPLHKLYRERIWYLDIIRINNLTNHL.

It belongs to the intron maturase 2 family. MatK subfamily.

The protein localises to the plastid. It is found in the chloroplast. Functionally, usually encoded in the trnK tRNA gene intron. Probably assists in splicing its own and other chloroplast group II introns. In Pistia stratiotes (Water lettuce), this protein is Maturase K.